A 411-amino-acid chain; its full sequence is Arginine deiminase (411 aa).

C401 acts as the Amidino-cysteine intermediate in catalysis.

The protein belongs to the arginine deiminase family.

Its subcellular location is the cytoplasm. The catalysed reaction is L-arginine + H2O = L-citrulline + NH4(+). It functions in the pathway amino-acid degradation; L-arginine degradation via ADI pathway; carbamoyl phosphate from L-arginine: step 1/2. The chain is Arginine deiminase from Staphylococcus aureus (strain JH9).